The sequence spans 355 residues: Protein-glutamate methylesterase/protein-glutamine glutaminase (355 aa).

Residues 3–121 (NVLVVEDSPV…HPDHEATARK (119 aa)) form the Response regulatory domain. Asp54 carries the post-translational modification 4-aspartylphosphate. One can recognise a CheB-type methylesterase domain in the interval 154 to 348 (PLLNRVAPAR…AALTNLVAER (195 aa)). Active-site residues include Ser170, His197, and Asp290.

This sequence belongs to the CheB family. Post-translationally, phosphorylated by CheA. Phosphorylation of the N-terminal regulatory domain activates the methylesterase activity.

The protein resides in the cytoplasm. It catalyses the reaction [protein]-L-glutamate 5-O-methyl ester + H2O = L-glutamyl-[protein] + methanol + H(+). The catalysed reaction is L-glutaminyl-[protein] + H2O = L-glutamyl-[protein] + NH4(+). Its function is as follows. Involved in chemotaxis. Part of a chemotaxis signal transduction system that modulates chemotaxis in response to various stimuli. Catalyzes the demethylation of specific methylglutamate residues introduced into the chemoreceptors (methyl-accepting chemotaxis proteins or MCP) by CheR. Also mediates the irreversible deamidation of specific glutamine residues to glutamic acid. This Nitrosospira multiformis (strain ATCC 25196 / NCIMB 11849 / C 71) protein is Protein-glutamate methylesterase/protein-glutamine glutaminase.